The primary structure comprises 192 residues: Apoptosis regulator BAX (192 aa).

Residue methionine 1 is modified to N-acetylmethionine. A BH3 motif is present at residues 59 to 73 (LSECLKRIGDELDSN). The short motif at 98–118 (DMFSDGNFNWGRVVALFYFAS) is the BH1 element. A Glycyl lysine isopeptide (Lys-Gly) (interchain with G-Cter in ubiquitin) cross-link involves residue lysine 128. The short motif at 150 to 165 (GWIQDQGGWDGLLSYF) is the BH2 element. Residues 172-192 (TVTIFVAGVLTASLTIWKKMG) traverse the membrane as a helical segment. Lysine 190 participates in a covalent cross-link: Glycyl lysine isopeptide (Lys-Gly) (interchain with G-Cter in ubiquitin).

This sequence belongs to the Bcl-2 family. In terms of assembly, homodimer. Forms higher oligomers under stress conditions. Forms heterooligomers with BAK. Interacts with BCL2L11. Interaction with BCL2L11 promotes BAX oligomerization and association with mitochondrial membranes, with subsequent release of cytochrome c. Forms heterodimers with BCL2, BCL2L1 isoform Bcl-X(L), BCL2L2, MCL1 and A1. Interacts with SH3GLB1. Interacts with humanin; forms fibers with humanin which results in BAX conformational changes and sequestering of BAX into the fibers, preventing BAX activation. Interacts with SFN and YWHAZ; the interaction occurs in the cytoplasm. Under stress conditions, JNK-mediated phosphorylation of SFN and YWHAZ, releases BAX to mitochondria. Interacts with RNF144B, which regulates the ubiquitin-dependent stability of BAX. Interacts with CLU under stress conditions that cause a conformation change leading to BAX oligomerization and association with mitochondria. Does not interact with CLU in unstressed cells. Interacts with FAIM2/LFG2. Interacts with RTL10/BOP. Interacts (via a C-terminal 33 residues) with NOL3 (via CARD domain); inhibits BAX activation and translocation and consequently cytochrome c release from mitochondria. Interacts with GIMAP3/IAN4 and GIMAP5/IAN5; this interaction is increased, when cells initiate apoptosis upon IL2 withdrawal. Interacts with IRF3; the interaction is direct, increases upon Sendai virus infection and mediates the formation of the apoptosis complex TOMM70:HSP90AA1:IRF3:BAX. Interacts with MOAP1, facilitating BAX-dependent mitochondrial outer membrane permeabilization and apoptosis. Interacts with BCL2L10/BCL-B. Interacts with non-acetylated XRCC6/Ku70; this interaction leads to BAX sequestration in the cytosol, away from the mitochondria, preventing BAX-mediated apoptosis. Interacts with BCL2A1 and BCL2L1 isoform Bcl-X(L). As to quaternary structure, (Microbial infection) Interacts with adenovirus E1B 19K protein; this interaction blocks BAX oligomerization. In terms of assembly, (Microbial infection) Interacts with human cytomegalovirus/HHV-5 protein vMIA/UL37. (Microbial infection) Interacts with enterovirus protein 2B; this interaction activates BAX-induced apoptosis. Ubiquitinated in the absence of XRCC6/Ku70. Ubiquitination promotes protein degradation. Ubiquitinated on Lys-128 and Lys-190. 'Lys-63'-linked polyubiquitin chains on Lys-128 are removed by USP12. As to expression, expressed in a wide variety of tissues. Isoform Psi is found in glial tumors. Isoform Alpha is expressed in spleen, breast, ovary, testis, colon and brain, and at low levels in skin and lung. Isoform Sigma is expressed in spleen, breast, ovary, testis, lung, colon, brain and at low levels in skin. Isoform Alpha and isoform Sigma are expressed in pro-myelocytic leukemia, histiocytic lymphoma, Burkitt's lymphoma, T-cell lymphoma, lymphoblastic leukemia, breast adenocarcinoma, ovary adenocarcinoma, prostate carcinoma, prostate adenocarcinoma, lung carcinoma, epidermoid carcinoma, small cell lung carcinoma and colon adenocarcinoma cell lines.

It is found in the mitochondrion outer membrane. The protein resides in the cytoplasm. It localises to the nucleus. In terms of biological role, plays a role in the mitochondrial apoptotic process. Under normal conditions, BAX is largely cytosolic via constant retrotranslocation from mitochondria to the cytosol mediated by BCL2L1/Bcl-xL, which avoids accumulation of toxic BAX levels at the mitochondrial outer membrane (MOM). Under stress conditions, undergoes a conformation change that causes translocation to the mitochondrion membrane, leading to the release of cytochrome c that then triggers apoptosis. Promotes activation of CASP3, and thereby apoptosis. The chain is Apoptosis regulator BAX (BAX) from Homo sapiens (Human).